The following is a 215-amino-acid chain: Thymidylate kinase (215 aa).

12 to 19 (GLEGAGKT) is a binding site for ATP.

The protein belongs to the thymidylate kinase family.

The enzyme catalyses dTMP + ATP = dTDP + ADP. Phosphorylation of dTMP to form dTDP in both de novo and salvage pathways of dTTP synthesis. This chain is Thymidylate kinase, found in Halorhodospira halophila (strain DSM 244 / SL1) (Ectothiorhodospira halophila (strain DSM 244 / SL1)).